A 3584-amino-acid chain; its full sequence is D-lysergyl-peptide-synthetase subunit 1 (3584 aa).

The interval 25-44 (IESINGDKNKSERHTASSSA) is disordered. A compositionally biased stretch (basic and acidic residues) spans 29–39 (NGDKNKSERHT). Residues 307–706 (SCCSRPNSQA…LGRKDDQVKI (400 aa)) form an adenylation (A) domain 1 region. The Carrier 1 domain maps to 848–917 (REKLLQALFA…TLREIVIVST (70 aa)). Serine 880 is modified (O-(pantetheine 4'-phosphoryl)serine). The interval 962–1353 (EDIYPCTHLQ…EHILTQIHSN (392 aa)) is condensation (C) domain 1. Positions 1396–1803 (QAKCQAQPDA…RRKDAQVKIR (408 aa)) are adenylation (A) domain 2. In terms of domain architecture, Carrier 2 spans 1948–2016 (TEHEISAIWA…TIRKLALARG (69 aa)). Serine 1980 is subject to O-(pantetheine 4'-phosphoryl)serine. Positions 2066–2483 (ERIYPCSPIQ…ALPVLDEDQM (418 aa)) are condensation (C) domain 2. Residues 2508-2906 (QCIRCPDSPS…GRNDDQVKVR (399 aa)) form an adenylation (A) domain 3 region. One can recognise a Carrier 3 domain in the interval 3041–3109 (MEAELQQLVG…RLSDLARIVE (69 aa)). At serine 3073 the chain carries O-(pantetheine 4'-phosphoryl)serine. The cyclization (Cyc) domain stretch occupies residues 3174–3472 (LYFSKPMASE…VAKSTTWSSD (299 aa)).

The protein belongs to the NRP synthetase family.

The protein operates within alkaloid biosynthesis; ergot alkaloid biosynthesis. Functionally, D-lysergyl-peptide-synthetase subunit 1; part of the gene cluster that mediates the biosynthesis of fungal ergot alkaloid. DmaW catalyzes the first step of ergot alkaloid biosynthesis by condensing dimethylallyl diphosphate (DMAP) and tryptophan to form 4-dimethylallyl-L-tryptophan. The second step is catalyzed by the methyltransferase easF that methylates 4-dimethylallyl-L-tryptophan in the presence of S-adenosyl-L-methionine, resulting in the formation of 4-dimethylallyl-L-abrine. The catalase easC and the FAD-dependent oxidoreductase easE then transform 4-dimethylallyl-L-abrine to chanoclavine-I which is further oxidized by easD in the presence of NAD(+), resulting in the formation of chanoclavine-I aldehyde. Agroclavine dehydrogenase easG then mediates the conversion of chanoclavine-I aldehyde to agroclavine via a non-enzymatic adduct reaction: the substrate is an iminium intermediate that is formed spontaneously from chanoclavine-I aldehyde in the presence of glutathione. The presence of easA is not required to complete this reaction. Further conversion of agroclavine to paspalic acid is a two-step process involving oxidation of agroclavine to elymoclavine and of elymoclavine to paspalic acid, the second step being performed by the elymoclavine oxidase cloA. Paspalic acid is then further converted to D-lysergic acid. Ergopeptines are assembled from D-lysergic acid and three different amino acids by the D-lysergyl-peptide-synthetases composed each of a monomudular and a trimodular nonribosomal peptide synthetase subunit. LpsB and lpsC encode the monomodular subunits responsible for D-lysergic acid activation and incorporation into the ergopeptine backbone. LpsA1 and A2 subunits encode the trimodular nonribosomal peptide synthetase assembling the tripeptide portion of ergopeptines. LpsA1 is responsible for formation of the major ergopeptine, ergotamine, and lpsA2 for alpha-ergocryptine, the minor ergopeptine of the total alkaloid mixture elaborated by C.purpurea. D-lysergyl-tripeptides are assembled by the nonribosomal peptide synthetases and released as N-(D-lysergyl-aminoacyl)-lactams. Cyclolization of the D-lysergyl-tripeptides is performed by the Fe(2+)/2-ketoglutarate-dependent dioxygenase easH which introduces a hydroxyl group into N-(D-lysergyl-aminoacyl)-lactam at alpha-C of the aminoacyl residue followed by spontaneous condensation with the terminal lactam carbonyl group. The sequence is that of D-lysergyl-peptide-synthetase subunit 1 from Claviceps purpurea (strain 20.1) (Ergot fungus).